A 234-amino-acid chain; its full sequence is Small ribosomal subunit protein uS3 (234 aa).

The KH type-2 domain occupies 39 to 109 (IRTLINKHYG…EVRIAIYEVK (71 aa)).

It belongs to the universal ribosomal protein uS3 family. In terms of assembly, part of the 30S ribosomal subunit. Forms a tight complex with proteins S10 and S14.

Its function is as follows. Binds the lower part of the 30S subunit head. Binds mRNA in the 70S ribosome, positioning it for translation. This Coprothermobacter proteolyticus (strain ATCC 35245 / DSM 5265 / OCM 4 / BT) protein is Small ribosomal subunit protein uS3.